A 625-amino-acid chain; its full sequence is Phosphomethylpyrimidine synthase (625 aa).

Substrate is bound by residues Asn231, Met260, Tyr289, His325, 345-347, 386-389, and Glu425; these read SRG and DGLR. Position 429 (His429) interacts with Zn(2+). Tyr452 provides a ligand contact to substrate. His493 provides a ligand contact to Zn(2+). [4Fe-4S] cluster is bound by residues Cys573, Cys576, and Cys581.

Belongs to the ThiC family. Homodimer. It depends on [4Fe-4S] cluster as a cofactor.

It carries out the reaction 5-amino-1-(5-phospho-beta-D-ribosyl)imidazole + S-adenosyl-L-methionine = 4-amino-2-methyl-5-(phosphooxymethyl)pyrimidine + CO + 5'-deoxyadenosine + formate + L-methionine + 3 H(+). It functions in the pathway cofactor biosynthesis; thiamine diphosphate biosynthesis. In terms of biological role, catalyzes the synthesis of the hydroxymethylpyrimidine phosphate (HMP-P) moiety of thiamine from aminoimidazole ribotide (AIR) in a radical S-adenosyl-L-methionine (SAM)-dependent reaction. The chain is Phosphomethylpyrimidine synthase from Acinetobacter baumannii (strain AB0057).